We begin with the raw amino-acid sequence, 1189 residues long: Pumilio homolog 1 (1189 aa).

Disordered stretches follow at residues 24 to 65 (QHAQ…SSPV), 233 to 288 (SCLR…QNGI), 491 to 525 (QQTTQQTQQGQQQVLRGGASQRPLTPNQNQQGQQT), 614 to 652 (AGTTNGPFRPLGTQQPQPQPQQQPTNNLASSSFYGNNSL), and 743 to 774 (GPVGMPLPSQGPGHSQTPPPSLSSHGSSSSLN). Positions 45–58 (QAQPQPAANQALAA) are enriched in low complexity. A compositionally biased stretch (basic and acidic residues) spans 250-277 (NDKGDKKNKGTFDGDKLGDLKEEGDVMD). Positions 491–503 (QQTTQQTQQGQQQ) are enriched in low complexity. Polar residues predominate over residues 512–525 (RPLTPNQNQQGQQT). 2 stretches are compositionally biased toward low complexity: residues 627-652 (QQPQPQPQQQPTNNLASSSFYGNNSL) and 764-774 (LSSHGSSSSLN). In terms of domain architecture, PUM-HD spans 829-1171 (GRSRLLEDFR…HILAKLEKYY (343 aa)). 8 Pumilio repeats span residues 849 to 884 (EIAGHIMEFSQDQHGSRFIQLKLERATPAERQLVFN), 885 to 920 (EILQAAYQLMVDVFGNYVIQKFFEFGSLEQKLALAE), 921 to 958 (RIRGHVLSLALQMYGCRVIQKALEFIPPDQQVINEMVR), 959 to 994 (ELDGHVLKCVKDQNGNHVVQKCIECVQPQSLQFIID), 995 to 1030 (AFKGQVFALSTHPYGCRVIQRILEHCLPEQTLPILE), 1031 to 1066 (ELHQHTEQLVQDQYGNYVIQHVLEHGRPEDKSKIVA), 1067 to 1102 (EIRGNVLVLSQHKFASNVVEKCVTHASRTERAMLID), and 1106 to 1145 (TMNDGPHSALYTMMKDQYANYVVQKMIDVAEPAQRKIVMH). The segment at 864-868 (SRFIQ) is adenine-nucleotide binding in RNA target. The segment at 900–904 (NYVIQ) is uracil-nucleotide binding in RNA target. The adenine-nucleotide binding in RNA target stretch occupies residues 936 to 940 (CRVIQ). The interval 974–978 (NHVVQ) is non-specific-nucleotide binding in RNA target. An adenine-nucleotide binding in RNA target region spans residues 1010 to 1014 (CRVIQ). Residues 1046 to 1050 (NYVIQ) are uracil-nucleotide binding in RNA target. Guanine-nucleotide binding in RNA target regions lie at residues 1082–1086 (SNVVE) and 1083–1086 (NVVE). The segment at 1125–1129 (NYVVQ) is uracil-nucleotide binding in RNA target.

In terms of tissue distribution, detected in embryonic male and female gonads, heart, liver and muscle. Detected in adult brain, testis, ovary, heart, lung, spleen, kidney and muscle.

It is found in the cytoplasm. The protein localises to the P-body. It localises to the cytoplasmic granule. Sequence-specific RNA-binding protein that acts as a post-transcriptional repressor by binding the 3'-UTR of mRNA targets. Binds to an RNA consensus sequence, the Pumilio Response Element (PRE), 5'-UGUANAUA-3', that is related to the Nanos Response Element (NRE). Mediates post-transcriptional repression of transcripts via different mechanisms: acts via direct recruitment of the CCR4-POP2-NOT deadenylase leading to translational inhibition and mRNA degradation. Also mediates deadenylation-independent repression by promoting accessibility of miRNAs. This is Pumilio homolog 1 (PUM1) from Gallus gallus (Chicken).